The chain runs to 33 residues: Dermonecrotic toxin LiSicTox-alphaI-1 (33 aa).

Glu32 lines the Mg(2+) pocket.

It belongs to the arthropod phospholipase D family. Class II subfamily. The cofactor is Mg(2+). In terms of processing, contains 2 disulfide bonds. In terms of tissue distribution, expressed by the venom gland.

Its subcellular location is the secreted. It catalyses the reaction an N-(acyl)-sphingosylphosphocholine = an N-(acyl)-sphingosyl-1,3-cyclic phosphate + choline. The enzyme catalyses an N-(acyl)-sphingosylphosphoethanolamine = an N-(acyl)-sphingosyl-1,3-cyclic phosphate + ethanolamine. The catalysed reaction is a 1-acyl-sn-glycero-3-phosphocholine = a 1-acyl-sn-glycero-2,3-cyclic phosphate + choline. It carries out the reaction a 1-acyl-sn-glycero-3-phosphoethanolamine = a 1-acyl-sn-glycero-2,3-cyclic phosphate + ethanolamine. Functionally, dermonecrotic toxins cleave the phosphodiester linkage between the phosphate and headgroup of certain phospholipids (sphingolipid and lysolipid substrates), forming an alcohol (often choline) and a cyclic phosphate. This toxin acts on sphingomyelin (SM). It may also act on ceramide phosphoethanolamine (CPE), lysophosphatidylcholine (LPC) and lysophosphatidylethanolamine (LPE), but not on lysophosphatidylserine (LPS), and lysophosphatidylglycerol (LPG). It acts by transphosphatidylation, releasing exclusively cyclic phosphate products as second products. In vivo, intradermal injection induces dermonecrosis. Induces hemolysis, increased vascular permeability, edema, inflammatory response, and platelet aggregation. The sequence is that of Dermonecrotic toxin LiSicTox-alphaI-1 from Loxosceles intermedia (Brown spider).